The sequence spans 1193 residues: Probable DNA-directed RNA polymerase II subunit RPB2 homolog (1193 aa).

Aspartate 808 is a Mg(2+) binding site. Zn(2+) is bound by residues cysteine 1137, cysteine 1140, cysteine 1155, and cysteine 1158. The segment at 1137–1158 (CVPCKSYFKVVKTQNGFFCSGC) adopts a C4-type zinc-finger fold.

Belongs to the RNA polymerase beta chain family.

The enzyme catalyses RNA(n) + a ribonucleoside 5'-triphosphate = RNA(n+1) + diphosphate. In terms of biological role, component of the DNA-dependent RNA polymerase that catalyzes the transcription of DNA into RNA using the four ribonucleoside triphosphates as substrates. Second largest component of RNA polymerase II which synthesizes mRNA precursors and many functional non-coding RNAs. Proposed to contribute to the polymerase catalytic activity and forms the polymerase active center together with the largest subunit. This is Probable DNA-directed RNA polymerase II subunit RPB2 homolog from Invertebrate iridescent virus 6 (IIV-6).